Reading from the N-terminus, the 378-residue chain is MSCAKKLVTLNPCTSVKLVPHRPIRATKMQCWMHPRRATCRVQRLRDAYHDERNESSLLHMTVYSDIFLDERARPYYRQLLRKRTDAAAARRAFLNAGQVHDCLLLEPAPSEHFKSIEEAGETNMSTLRTILATLTSFLGRVASTEYFLIVDRLFIDLVYSEFRAVVLPQHAYVLQQACADTDSSDEEPCERGVEPPWNQIVVAAHVAAAHRHEGARYNEWQRQSQYIYQTFLVYATLLTTILKQSNPFIISENSSASVVLRTLGKCPDNPERVNCCKLSYGGAPPGHLMCPPRAIVKKIYRYVNWASNPHKDQRYSALIARPSDAATGAGSGDLRENVDGNLHADDITPLILLDWDNFVSALMDYFGAPPGARPAGI.

This is an uncharacterized protein from Orgyia pseudotsugata multicapsid polyhedrosis virus (OpMNPV).